A 74-amino-acid polypeptide reads, in one-letter code: uncharacterized protein (74 aa).

A helical transmembrane segment spans residues 20 to 40; sequence IYSYTLLTLLVITLICYLIHI.

The protein belongs to the asfivirus KP93L family.

Its subcellular location is the host membrane. This is an uncharacterized protein from African swine fever virus (isolate Tick/South Africa/Pretoriuskop Pr4/1996) (ASFV).